Here is a 167-residue protein sequence, read N- to C-terminus: N5-carboxyaminoimidazole ribonucleotide mutase (167 aa).

3 residues coordinate substrate: Ser-11, Asp-14, and Arg-41.

This sequence belongs to the AIR carboxylase family. Class I subfamily.

The catalysed reaction is 5-carboxyamino-1-(5-phospho-D-ribosyl)imidazole + H(+) = 5-amino-1-(5-phospho-D-ribosyl)imidazole-4-carboxylate. The protein operates within purine metabolism; IMP biosynthesis via de novo pathway; 5-amino-1-(5-phospho-D-ribosyl)imidazole-4-carboxylate from 5-amino-1-(5-phospho-D-ribosyl)imidazole (N5-CAIR route): step 2/2. Catalyzes the conversion of N5-carboxyaminoimidazole ribonucleotide (N5-CAIR) to 4-carboxy-5-aminoimidazole ribonucleotide (CAIR). The polypeptide is N5-carboxyaminoimidazole ribonucleotide mutase (Aquifex aeolicus (strain VF5)).